The chain runs to 340 residues: tRNA N6-adenosine threonylcarbamoyltransferase (340 aa).

His-113 and His-117 together coordinate Fe cation. Substrate-binding positions include 135–139 (LVSGG), Asp-169, Gly-182, Asp-186, and Asn-274. Asp-302 lines the Fe cation pocket.

This sequence belongs to the KAE1 / TsaD family. It depends on Fe(2+) as a cofactor.

The protein resides in the cytoplasm. It carries out the reaction L-threonylcarbamoyladenylate + adenosine(37) in tRNA = N(6)-L-threonylcarbamoyladenosine(37) in tRNA + AMP + H(+). Functionally, required for the formation of a threonylcarbamoyl group on adenosine at position 37 (t(6)A37) in tRNAs that read codons beginning with adenine. Is involved in the transfer of the threonylcarbamoyl moiety of threonylcarbamoyl-AMP (TC-AMP) to the N6 group of A37, together with TsaE and TsaB. TsaD likely plays a direct catalytic role in this reaction. This chain is tRNA N6-adenosine threonylcarbamoyltransferase, found in Mycolicibacterium smegmatis (strain ATCC 700084 / mc(2)155) (Mycobacterium smegmatis).